A 100-amino-acid polypeptide reads, in one-letter code: MKISEEEVRHVAKLSKLSFSESETTTFATTLSKIVDMVELLNEVDTEGVAITTTMADKKNVMRQDVAEEGTDRALLFKNVPEKENHFIKVPAILDDGGDA.

Belongs to the GatC family. As to quaternary structure, heterotrimer of A, B and C subunits.

The enzyme catalyses L-glutamyl-tRNA(Gln) + L-glutamine + ATP + H2O = L-glutaminyl-tRNA(Gln) + L-glutamate + ADP + phosphate + H(+). It carries out the reaction L-aspartyl-tRNA(Asn) + L-glutamine + ATP + H2O = L-asparaginyl-tRNA(Asn) + L-glutamate + ADP + phosphate + 2 H(+). In terms of biological role, allows the formation of correctly charged Asn-tRNA(Asn) or Gln-tRNA(Gln) through the transamidation of misacylated Asp-tRNA(Asn) or Glu-tRNA(Gln) in organisms which lack either or both of asparaginyl-tRNA or glutaminyl-tRNA synthetases. The reaction takes place in the presence of glutamine and ATP through an activated phospho-Asp-tRNA(Asn) or phospho-Glu-tRNA(Gln). This is Glutamyl-tRNA(Gln) amidotransferase subunit C from Streptococcus pyogenes serotype M1.